The sequence spans 1066 residues: MSFNDPFSILFGNGGDSRRNNANNDDPIILDVEADGDGPARNTNAGPSGSSRPPRGPANPRITRKPASGGSGGSRGSKILIGVVLALAIIVGLFFGLSRFITDLMWYGQLGFQSVVWTQLGVKIGLWVAYALLMALTGFVSAWLAIRARPDSADGSTIRINGDVVEVGKSVSSKTARRVAVVISLIVGVIFGSQFNANWSEILLMFNAQSFGTTDPQFGLDNGFYVFVLPGLKLVLAAVAMLLGVGLVFSVVTHVLMGGIRITMPVNGRGLFSITKRCRRQLGIWLMLNMFAWAVRQMIGVFDQLTVQGSRITGASYTAVHANIPVTFIMAALTAILGVVLGIWLMRSHTLEGQASIGVRASAALKAWRVPVTSIAVVVVVGLVLTVAWPVLLQRFRVNPNAQEMESTYIQRNIDATRAAYGLDKLKTEQYKVTDKGEQGALAKEGDTTAQIRLLDPQVVSPTFKQLQQSKQYYTFADTLAVDKYEIDGVSQDTVIAARELDLAGNDNRNWVNDHTVYTHGYGVVAAYGNKVTADGQPEFFESGIPTQGKLTESEKYEPRIYFSPNTTEYSIVGAPEGTQAWEFDYPTGSEGALTTFKGDGGPSVGNLFSRILYAIRFGSDQILFSDRVTSESQILYDRSPKERVAKVAPYLTLDGRVYPAVVDGRVKWIVDGYTTSDAYPYSQMTDLGSATKDSTTVSSATVSSLGSQKANYIRNSVKATVDAYDGSVDLYVWDQSDPVIKAWEKIFPGQYHQLSDISGDLMSHMRYPESLFKVQRELLSKYHVTSANQYYSGEDFWQTPVDPTESQSQQDQDILQPPYYLTLQTGGTKEPVFSLSSTYIPAGQSTREILTGFLSVDSDAGNEKGKIGSNYGTIRLQELPKDSNVPGPGQAQNNFNANADVSKELNLLQSGDTQVVRGNLLTLPLGGGLVYVQPVYVKSSGATSFPLLKKTLVAFGDQVGFADTLDEALDQVFGGDSGAAAGDAENVSGDQSGSDTNGGQSGTTDGKSDSGSSSDRSPELQQALNDAAQAMKDSQSAMKNGDWTAYGKAQQELEDALNKAIELDK.

Positions 12–74 (GNGGDSRRNN…KPASGGSGGS (63 aa)) are disordered. A compositionally biased stretch (low complexity) spans 44–61 (NAGPSGSSRPPRGPANPR). 7 helical membrane-spanning segments follow: residues 77-97 (SKIL…FFGL), 126-146 (LWVA…WLAI), 179-199 (VAVV…NANW), 235-255 (VLAA…VTHV), 282-302 (LGIW…IGVF), 326-346 (VTFI…IWLM), and 372-392 (VTSI…WPVL). The interval 977–1044 (DSGAAAGDAE…SQSAMKNGDW (68 aa)) is disordered. The segment covering 989–998 (SGDQSGSDTN) has biased composition (polar residues). A compositionally biased stretch (low complexity) spans 1003–1016 (GTTDGKSDSGSSSD).

This sequence belongs to the UPF0182 family.

Its subcellular location is the cell membrane. The protein is UPF0182 protein BL1029 of Bifidobacterium longum (strain NCC 2705).